The chain runs to 463 residues: uncharacterized protein (463 aa).

This is an uncharacterized protein from Alkalihalophilus pseudofirmus (strain ATCC BAA-2126 / JCM 17055 / OF4) (Bacillus pseudofirmus).